We begin with the raw amino-acid sequence, 60 residues long: MATKTVKVTQTKSGIGRLPKHRATLTGLGLRRIGHTVELEDTPSVRGMINKVYYMVKVED.

It belongs to the universal ribosomal protein uL30 family. As to quaternary structure, part of the 50S ribosomal subunit.

The sequence is that of Large ribosomal subunit protein uL30 from Shewanella baltica (strain OS223).